Here is a 161-residue protein sequence, read N- to C-terminus: Cyclic pyranopterin monophosphate synthase (161 aa).

Residues 75–77 and 113–114 each bind substrate; these read LCH and ME. The active site involves D128.

It belongs to the MoaC family. In terms of assembly, homohexamer; trimer of dimers.

The enzyme catalyses (8S)-3',8-cyclo-7,8-dihydroguanosine 5'-triphosphate = cyclic pyranopterin phosphate + diphosphate. It participates in cofactor biosynthesis; molybdopterin biosynthesis. Catalyzes the conversion of (8S)-3',8-cyclo-7,8-dihydroguanosine 5'-triphosphate to cyclic pyranopterin monophosphate (cPMP). The chain is Cyclic pyranopterin monophosphate synthase from Enterobacter sp. (strain 638).